The sequence spans 420 residues: L-glutamine:2-deoxy-scyllo-inosose aminotransferase (420 aa).

N6-(pyridoxal phosphate)lysine is present on Lys201.

This sequence belongs to the DegT/DnrJ/EryC1 family. L-glutamine:2-deoxy-scyllo-inosose/scyllo-inosose aminotransferase subfamily. The cofactor is pyridoxal 5'-phosphate.

The enzyme catalyses 2-deoxy-L-scyllo-inosose + L-glutamine = 2-deoxy-scyllo-inosamine + 2-oxoglutaramate. It catalyses the reaction 3-amino-2,3-dideoxy-scyllo-inosose + L-glutamine = 2-deoxystreptamine + 2-oxoglutaramate. It participates in metabolic intermediate biosynthesis; 2-deoxystreptamine biosynthesis; 2-deoxystreptamine from D-glucose 6-phosphate: step 2/4. The protein operates within antibiotic biosynthesis; gentamicin biosynthesis. In terms of biological role, catalyzes the PLP-dependent transamination of 2-deoxy-scyllo-inosose (2-DOI) to form 2-deoxy-scyllo-inosamine (2-DOIA) using L-glutamine as the amino donor. Also catalyzes the transamination of 3-amino-2,3-dideoxy-scyllo-inosose (keto-2-DOIA) into 2-deoxystreptamine (2-DOS). This Micromonospora echinospora (Micromonospora purpurea) protein is L-glutamine:2-deoxy-scyllo-inosose aminotransferase (gntA).